The primary structure comprises 157 residues: Ribosomal RNA large subunit methyltransferase H (157 aa).

S-adenosyl-L-methionine contacts are provided by residues L75, G106, and 125–130 (FSELTF).

Belongs to the RNA methyltransferase RlmH family. In terms of assembly, homodimer.

It is found in the cytoplasm. The catalysed reaction is pseudouridine(1915) in 23S rRNA + S-adenosyl-L-methionine = N(3)-methylpseudouridine(1915) in 23S rRNA + S-adenosyl-L-homocysteine + H(+). Specifically methylates the pseudouridine at position 1915 (m3Psi1915) in 23S rRNA. The chain is Ribosomal RNA large subunit methyltransferase H from Malacoplasma penetrans (strain HF-2) (Mycoplasma penetrans).